A 144-amino-acid polypeptide reads, in one-letter code: Cysteine-rich tail protein 1 (144 aa).

Residues 51–105 (APEPTHLLQPTEVPGPKGAKGNQGAAPIQNQQAWQQPGNPYSSSQRQAGLTYAGP) form a disordered region. Positions 78 to 98 (IQNQQAWQQPGNPYSSSQRQA) are enriched in polar residues.

Belongs to the CYSRT1 family. Interacts with LCE1B; the interaction is direct. Interacts with LCE2C; the interaction is direct. Interacts with LCE3A; the interaction is direct. Interacts with LCE3C; the interaction is direct. Interacts with LCE4A; the interaction is direct. Interacts with LCE5A; the interaction is direct. Interacts with LCE1C. Interacts with LCE1D. Interacts with LCE1E. Interacts with LCE2A. Interacts with LCE3D. Interacts with LCE3E. Interacts with LCE1A. In terms of tissue distribution, expressed in the stratum granulosum, in skin and oral epithelia (at protein level).

The protein localises to the cornified envelope. Component of the stratum corneum that may contribute to epidermal antimicrobial host defenses. The sequence is that of Cysteine-rich tail protein 1 (CYSRT1) from Homo sapiens (Human).